A 244-amino-acid chain; its full sequence is Uridylate kinase (244 aa).

Residue 18 to 21 (KVSG) participates in ATP binding. Residue G60 coordinates UMP. 2 residues coordinate ATP: G61 and R65. Residues D80 and 141 to 148 (TGNPFCTT) contribute to the UMP site. Positions 168, 169, 174, and 177 each coordinate ATP.

Belongs to the UMP kinase family. Homohexamer.

It is found in the cytoplasm. It catalyses the reaction UMP + ATP = UDP + ADP. Its pathway is pyrimidine metabolism; CTP biosynthesis via de novo pathway; UDP from UMP (UMPK route): step 1/1. Inhibited by UTP. Functionally, catalyzes the reversible phosphorylation of UMP to UDP. The polypeptide is Uridylate kinase (Rickettsia typhi (strain ATCC VR-144 / Wilmington)).